Consider the following 405-residue polypeptide: Acetylornithine/succinyldiaminopimelate aminotransferase (405 aa).

Pyridoxal 5'-phosphate-binding positions include 108-109 (GT) and Phe-141. Arg-144 is a N(2)-acetyl-L-ornithine binding site. 226 to 229 (DEVQ) is a pyridoxal 5'-phosphate binding site. Position 255 is an N6-(pyridoxal phosphate)lysine (Lys-255). Ser-283 is a N(2)-acetyl-L-ornithine binding site. Thr-284 is a pyridoxal 5'-phosphate binding site.

This sequence belongs to the class-III pyridoxal-phosphate-dependent aminotransferase family. ArgD subfamily. In terms of assembly, homodimer. Pyridoxal 5'-phosphate serves as cofactor.

It localises to the cytoplasm. It carries out the reaction N(2)-acetyl-L-ornithine + 2-oxoglutarate = N-acetyl-L-glutamate 5-semialdehyde + L-glutamate. The catalysed reaction is N-succinyl-(2S,6S)-2,6-diaminopimelate + 2-oxoglutarate = (S)-2-succinylamino-6-oxoheptanedioate + L-glutamate. It participates in amino-acid biosynthesis; L-arginine biosynthesis; N(2)-acetyl-L-ornithine from L-glutamate: step 4/4. The protein operates within amino-acid biosynthesis; L-lysine biosynthesis via DAP pathway; LL-2,6-diaminopimelate from (S)-tetrahydrodipicolinate (succinylase route): step 2/3. Its activity is regulated as follows. Inhibited by gabaculine (Gcn). In terms of biological role, involved in both the arginine and lysine biosynthetic pathways. This is Acetylornithine/succinyldiaminopimelate aminotransferase from Salmonella typhimurium (strain LT2 / SGSC1412 / ATCC 700720).